Here is a 140-residue protein sequence, read N- to C-terminus: Ribosome-binding factor A (140 aa).

Residues 118–133 (DEAKQQKHNGKDKTDT) show a composition bias toward basic and acidic residues. The segment at 118–140 (DEAKQQKHNGKDKTDTADSEGEE) is disordered.

This sequence belongs to the RbfA family. Monomer. Binds 30S ribosomal subunits, but not 50S ribosomal subunits or 70S ribosomes.

The protein resides in the cytoplasm. In terms of biological role, one of several proteins that assist in the late maturation steps of the functional core of the 30S ribosomal subunit. Associates with free 30S ribosomal subunits (but not with 30S subunits that are part of 70S ribosomes or polysomes). Required for efficient processing of 16S rRNA. May interact with the 5'-terminal helix region of 16S rRNA. The polypeptide is Ribosome-binding factor A (Shewanella woodyi (strain ATCC 51908 / MS32)).